The chain runs to 349 residues: MELELSLGDSPAPVKATIAPTPVLIPTCMGDEEDLELVLGVRATRRDEQDDQTTCTQSSEEAMEGEEDETRPHGEAPVESLSFPLFVSSAETGSANSEMCTRGFDVNTRPADGGAEAGRPSSPSSMQEASTRQQVADQEAADDEDNGGGGARKKLRLSKEQSSFLEDSFKEHSTLTPKQKSDLANRLNLRPRQVEVWFQNRRARTKLKQTEVDCEHLKRCCERLTRENRRLQREVAELRGTLRTTTSSYPPLYGLHHLPAAAGTVFRVCPSCEHSKVVAAAASESFSPRVFAGGGAPAAITAAAAVPSPGAGSPPSSSAALFGARRPHFGPFAAAVIPPVLRRQPSATS.

The disordered stretch occupies residues 42–186 (RATRRDEQDD…PKQKSDLANR (145 aa)). Polar residues-rich tracts occupy residues 89 to 99 (SAETGSANSEM) and 121 to 135 (SSPS…RQQV). Residues 150–209 (GARKKLRLSKEQSSFLEDSFKEHSTLTPKQKSDLANRLNLRPRQVEVWFQNRRARTKLKQ) constitute a DNA-binding region (homeobox). Positions 167-183 (DSFKEHSTLTPKQKSDL) are enriched in basic and acidic residues. The segment at 208-252 (KQTEVDCEHLKRCCERLTRENRRLQREVAELRGTLRTTTSSYPPL) is leucine-zipper.

It belongs to the HD-ZIP homeobox family. Class II subfamily. Homodimer. May form a heterodimer with HOX1, HOX2 or HOX3. Expressed in seedlings, roots, leaves, nodes, internodes, flowers and embryo.

Its subcellular location is the nucleus. Functionally, probable transcription factor that binds to the DNA sequence 5'-CAAT[GC]ATTG-3'. This chain is Homeobox-leucine zipper protein HOX7 (HOX7), found in Oryza sativa subsp. japonica (Rice).